The sequence spans 155 residues: SsrA-binding protein (155 aa).

It belongs to the SmpB family.

Its subcellular location is the cytoplasm. In terms of biological role, required for rescue of stalled ribosomes mediated by trans-translation. Binds to transfer-messenger RNA (tmRNA), required for stable association of tmRNA with ribosomes. tmRNA and SmpB together mimic tRNA shape, replacing the anticodon stem-loop with SmpB. tmRNA is encoded by the ssrA gene; the 2 termini fold to resemble tRNA(Ala) and it encodes a 'tag peptide', a short internal open reading frame. During trans-translation Ala-aminoacylated tmRNA acts like a tRNA, entering the A-site of stalled ribosomes, displacing the stalled mRNA. The ribosome then switches to translate the ORF on the tmRNA; the nascent peptide is terminated with the 'tag peptide' encoded by the tmRNA and targeted for degradation. The ribosome is freed to recommence translation, which seems to be the essential function of trans-translation. The protein is SsrA-binding protein of Streptococcus equi subsp. zooepidemicus (strain H70).